A 127-amino-acid polypeptide reads, in one-letter code: Protein translocase subunit SecE (127 aa).

Helical transmembrane passes span 16-36 (AMKW…NYLY), 41-61 (LPLR…VALL), and 96-116 (IVAA…GILV).

This sequence belongs to the SecE/SEC61-gamma family. Component of the Sec protein translocase complex. Heterotrimer consisting of SecY, SecE and SecG subunits. The heterotrimers can form oligomers, although 1 heterotrimer is thought to be able to translocate proteins. Interacts with the ribosome. Interacts with SecDF, and other proteins may be involved. Interacts with SecA.

The protein resides in the cell inner membrane. Functionally, essential subunit of the Sec protein translocation channel SecYEG. Clamps together the 2 halves of SecY. May contact the channel plug during translocation. This is Protein translocase subunit SecE from Salmonella typhi.